The sequence spans 1138 residues: Transmembrane channel-like protein 3 (1138 aa).

Over residues 1–15 the composition is skewed to low complexity; the sequence is MEAAPGTAAAAAKPA. 2 disordered regions span residues 1–20 and 29–54; these read MEAAPGTAAAAAKPAKSCKK and NIYTYQEPPHSNSDEDISEEKADSQD. Residues 1–155 are Cytoplasmic-facing; sequence MEAAPGTAAA…VASYFIFLRW (155 aa). The chain crosses the membrane as a helical span at residues 156–176; it reads LFGINIVLTIMTGAFVVLPEL. At 177–202 the chain is on the extracellular side; it reads LAGAPFGSTVSKTIRQEDLKTAQDLD. The helical transmembrane segment at 203–223 threads the bilayer; it reads TIWSLGGYLQYSVLFYGYYGS. Residues 224–233 lie on the Cytoplasmic side of the membrane; it reads DRKIGKAGYR. The chain crosses the membrane as a helical span at residues 234 to 254; sequence LPLAYFLVGMAVFAYSFIILL. Residues 255–327 lie on the Extracellular side of the membrane; the sequence is KKMAKNSRMS…KNLAVTISLR (73 aa). A glycan (N-linked (GlcNAc...) asparagine) is linked at asparagine 272. A helical transmembrane segment spans residues 328-348; that stretch reads IIANILVLLSLTGSIYIIYFV. The Cytoplasmic portion of the chain corresponds to 349-369; the sequence is VDRSQKLENNKRELTLWEKNE. A helical membrane pass occupies residues 370-390; sequence VSVVVSLITMIAPSAFELVAA. The Extracellular portion of the chain corresponds to 391 to 401; sequence LEMYHPRTTLR. The helical transmembrane segment at 402 to 422 threads the bilayer; the sequence is FQLARVLVLYLGNLYSLIIAL. Over 423 to 508 the chain is Cytoplasmic; it reads LDKVNSMSVT…CWETYVGQEM (86 aa). Residues 509-529 traverse the membrane as a helical segment; the sequence is LKLSIIDMIFTVASILLIDFF. Over 530 to 569 the chain is Extracellular; that stretch reads RGLCVRYLSDCWCWDLESKFPEYGEFKIAENVLHLVYNQG. A helical transmembrane segment spans residues 570–590; that stretch reads MIWMGAFFSPCLPAFNVLKLI. Residues 591 to 618 lie on the Cytoplasmic side of the membrane; that stretch reads GLMYLRSWAVLTCNVPHQQVFRASRSNN. The helical transmembrane segment at 619–639 threads the bilayer; the sequence is FYLAMLLFMLFLCMLPTIFAI. Topologically, residues 640-676 are extracellular; the sequence is ARYKPSLSCGPFSGQEKIYDIVSETIQNDFPAWFNSV. Residues 677 to 697 traverse the membrane as a helical segment; that stretch reads IAYISSPVVVLPALLLLFMLI. Topologically, residues 698–1138 are cytoplasmic; the sequence is YYLQSIARSL…EPNELVCSNV (441 aa). Positions 753–763 are enriched in polar residues; sequence NSEGTRFQSLD. Disordered regions lie at residues 753 to 859, 973 to 1005, and 1065 to 1095; these read NSEG…RYPS, SPHPSEDEEDEEALGRHYVKRSHRPRSLSDLRP, and PKTKHMLEQSLTESDSVSIESSSDPQNSSND. Residues 764 to 773 show a composition bias toward basic and acidic residues; it reads GSDKRPDKDG. Polar residues-rich tracts occupy residues 777–795 and 804–813; these read SQESSVRASTPRKNGSVLN and TRIQTISQTV. Residues 828-845 are compositionally biased toward low complexity; that stretch reads TTPTTSASLTPAPSVSSA. Positions 989–998 are enriched in basic residues; the sequence is HYVKRSHRPR. Positions 1074-1095 are enriched in low complexity; sequence SLTESDSVSIESSSDPQNSSND.

It belongs to the TMC family. As to expression, expressed in a range of tissues including cerebrum, cerebellum, retina, cochlea, lung, liver and heart. Also expressed in the apical, medial and basal portions of the basillar papilla.

Its subcellular location is the membrane. In terms of biological role, probable component of an ion channel. This chain is Transmembrane channel-like protein 3, found in Gallus gallus (Chicken).